Here is a 254-residue protein sequence, read N- to C-terminus: 3-deoxy-manno-octulosonate cytidylyltransferase (254 aa).

The protein belongs to the KdsB family.

The protein resides in the cytoplasm. The enzyme catalyses 3-deoxy-alpha-D-manno-oct-2-ulosonate + CTP = CMP-3-deoxy-beta-D-manno-octulosonate + diphosphate. The protein operates within nucleotide-sugar biosynthesis; CMP-3-deoxy-D-manno-octulosonate biosynthesis; CMP-3-deoxy-D-manno-octulosonate from 3-deoxy-D-manno-octulosonate and CTP: step 1/1. It participates in bacterial outer membrane biogenesis; lipopolysaccharide biosynthesis. Its function is as follows. Activates KDO (a required 8-carbon sugar) for incorporation into bacterial lipopolysaccharide in Gram-negative bacteria. This is 3-deoxy-manno-octulosonate cytidylyltransferase from Pseudomonas aeruginosa (strain LESB58).